Consider the following 316-residue polypeptide: 4-hydroxy-3-methylbut-2-enyl diphosphate reductase (316 aa).

Cys12 contributes to the [4Fe-4S] cluster binding site. 2 residues coordinate (2E)-4-hydroxy-3-methylbut-2-enyl diphosphate: His43 and His81. Residues His43 and His81 each coordinate dimethylallyl diphosphate. Residues His43 and His81 each coordinate isopentenyl diphosphate. Residue Cys103 coordinates [4Fe-4S] cluster. His131 serves as a coordination point for (2E)-4-hydroxy-3-methylbut-2-enyl diphosphate. His131 lines the dimethylallyl diphosphate pocket. Position 131 (His131) interacts with isopentenyl diphosphate. The active-site Proton donor is Glu133. Thr170 serves as a coordination point for (2E)-4-hydroxy-3-methylbut-2-enyl diphosphate. Cys198 contacts [4Fe-4S] cluster. Residues Ser226, Asn228, and Ser271 each coordinate (2E)-4-hydroxy-3-methylbut-2-enyl diphosphate. The dimethylallyl diphosphate site is built by Ser226, Asn228, and Ser271. 3 residues coordinate isopentenyl diphosphate: Ser226, Asn228, and Ser271.

It belongs to the IspH family. [4Fe-4S] cluster serves as cofactor.

The enzyme catalyses isopentenyl diphosphate + 2 oxidized [2Fe-2S]-[ferredoxin] + H2O = (2E)-4-hydroxy-3-methylbut-2-enyl diphosphate + 2 reduced [2Fe-2S]-[ferredoxin] + 2 H(+). It carries out the reaction dimethylallyl diphosphate + 2 oxidized [2Fe-2S]-[ferredoxin] + H2O = (2E)-4-hydroxy-3-methylbut-2-enyl diphosphate + 2 reduced [2Fe-2S]-[ferredoxin] + 2 H(+). The protein operates within isoprenoid biosynthesis; dimethylallyl diphosphate biosynthesis; dimethylallyl diphosphate from (2E)-4-hydroxy-3-methylbutenyl diphosphate: step 1/1. It functions in the pathway isoprenoid biosynthesis; isopentenyl diphosphate biosynthesis via DXP pathway; isopentenyl diphosphate from 1-deoxy-D-xylulose 5-phosphate: step 6/6. Functionally, catalyzes the conversion of 1-hydroxy-2-methyl-2-(E)-butenyl 4-diphosphate (HMBPP) into a mixture of isopentenyl diphosphate (IPP) and dimethylallyl diphosphate (DMAPP). Acts in the terminal step of the DOXP/MEP pathway for isoprenoid precursor biosynthesis. The protein is 4-hydroxy-3-methylbut-2-enyl diphosphate reductase of Bacillus thuringiensis (strain Al Hakam).